The primary structure comprises 31 residues: Protamine CIII (31 aa).

The interval 1 to 31 is disordered; it reads MPRRRRASRPVRRRRRPRVSRRRRRGGRRRR.

As to expression, testis.

Its subcellular location is the nucleus. The protein resides in the chromosome. In terms of biological role, protamines substitute for histones in the chromatin of sperm during the haploid phase of spermatogenesis. They compact sperm DNA into a highly condensed, stable and inactive complex. The protein is Protamine CIII of Oncorhynchus mykiss (Rainbow trout).